We begin with the raw amino-acid sequence, 258 residues long: D-beta-hydroxybutyrate dehydrogenase (258 aa).

6–30 is a binding site for NAD(+); that stretch reads VITGSTSGIGLAIARTLAKAGANIV. Ser-140 lines the substrate pocket. The active-site Proton acceptor is Tyr-153.

This sequence belongs to the short-chain dehydrogenases/reductases (SDR) family.

The catalysed reaction is (R)-3-hydroxybutanoate + NAD(+) = acetoacetate + NADH + H(+). The protein is D-beta-hydroxybutyrate dehydrogenase (bdhA) of Rhizobium meliloti (strain 1021) (Ensifer meliloti).